Here is a 271-residue protein sequence, read N- to C-terminus: Oligodendrocyte transcription factor 1 (271 aa).

The disordered stretch occupies residues 38–117; it reads YRQPPSSSSS…RKINSRERKR (80 aa). The segment covering 43–61 has biased composition (low complexity); it reads SSSSSSTSSTSSTSSSSTT. The 60-residue stretch at 105 to 164 folds into the bHLH domain; that stretch reads QLRRKINSRERKRMQDLNLAMDALREVILPYSAAHCQGAPGRKLSKIATLLLARNYILLL.

As to expression, expressed in the brain, in oligodendrocytes. Strongly expressed in oligodendrogliomas, while expression is weak to moderate in astrocytomas. Expression in glioblastomas is highly variable.

Its subcellular location is the nucleus. Functionally, promotes formation and maturation of oligodendrocytes, especially within the brain. Cooperates with OLIG2 to establish the pMN domain of the embryonic neural tube. The protein is Oligodendrocyte transcription factor 1 (OLIG1) of Homo sapiens (Human).